The sequence spans 396 residues: Elongation factor Tu (396 aa).

Positions 10–206 (KPHLNIGTIG…AVDENVPDPV (197 aa)) constitute a tr-type G domain. The tract at residues 19-26 (GHVDHGKT) is G1. GTP is bound at residue 19–26 (GHVDHGKT). Residue threonine 26 coordinates Mg(2+). The interval 62–66 (GITIN) is G2. The G3 stretch occupies residues 83–86 (DAPG). Residues 83-87 (DAPGH) and 138-141 (NKSD) contribute to the GTP site. The interval 138–141 (NKSD) is G4. The segment at 176–178 (SAL) is G5.

The protein belongs to the TRAFAC class translation factor GTPase superfamily. Classic translation factor GTPase family. EF-Tu/EF-1A subfamily. As to quaternary structure, monomer.

It is found in the cytoplasm. It catalyses the reaction GTP + H2O = GDP + phosphate + H(+). Its function is as follows. GTP hydrolase that promotes the GTP-dependent binding of aminoacyl-tRNA to the A-site of ribosomes during protein biosynthesis. This chain is Elongation factor Tu, found in Kocuria rhizophila (strain ATCC 9341 / DSM 348 / NBRC 103217 / DC2201).